We begin with the raw amino-acid sequence, 288 residues long: Probable syndecan (288 aa).

The signal sequence occupies residues 1-26 (MILKLNFCLSTYSVLILLSLSTQAFA). Over 27 to 231 (ANQAKTKVVP…ETLANGFYAA (205 aa)) the chain is Extracellular. The interval 67–175 (EVNGSGYPTD…NIHNDEDFFT (109 aa)) is disordered. N-linked (GlcNAc...) asparagine glycosylation is present at N69. 2 O-linked (Xyl...) (glycosaminoglycan) serine glycosylation sites follow: S71 and S86. Residues 89–104 (PPSSATTKSDKVTSPS) show a composition bias toward polar residues. A compositionally biased stretch (low complexity) spans 106–124 (AVVTAKPTTVPTTTASFKP). The segment covering 141–164 (VEEDEDDDEDEDEDDEDDEEDFAD) has biased composition (acidic residues). S214 is a glycosylation site (O-linked (Xyl...) (glycosaminoglycan) serine). Residues 232 to 252 (IAGGVLVAVITAILLVLFVVF) form a helical membrane-spanning segment. The Cytoplasmic portion of the chain corresponds to 253–288 (RIRKKDEGSYALDEPKQARPYASYGYTKASTKEFYA).

This sequence belongs to the syndecan proteoglycan family.

The protein localises to the membrane. Its subcellular location is the cell surface. It is found in the cell junction. It localises to the cytoplasm. Its function is as follows. Cell surface proteoglycan that bears heparan sulfate. Required for correct mitotic spindle orientation of the ABar blastomere division plane and this may be through modulation of astral microtubule array, and in association with the wnt-signaling proteins mig-5 and dsh-2. Involved in the migration of AQR and PQR neurons, which descend from the Q neuroblasts. Promotes the axon guidance of D-type motor neurons. This chain is Probable syndecan, found in Caenorhabditis elegans.